Here is a 384-residue protein sequence, read N- to C-terminus: Chaperone protein DnaJ (384 aa).

Residues 5 to 70 enclose the J domain; the sequence is DFYEVLGVSK…DKKAAYDRYG (66 aa). The CR-type zinc-finger motif lies at 143 to 221; sequence GAQKTITVPG…CHGSGRIEKE (79 aa). Residues C156, C159, C173, C176, C195, C198, C209, and C212 each contribute to the Zn(2+) site. 4 CXXCXGXG motif repeats span residues 156–163, 173–180, 195–202, and 209–216; these read CGSCNGTG, CPTCSGLG, CPTCGGQG, and CRVCHGSG.

This sequence belongs to the DnaJ family. Homodimer. The cofactor is Zn(2+).

It is found in the cytoplasm. Functionally, participates actively in the response to hyperosmotic and heat shock by preventing the aggregation of stress-denatured proteins and by disaggregating proteins, also in an autonomous, DnaK-independent fashion. Unfolded proteins bind initially to DnaJ; upon interaction with the DnaJ-bound protein, DnaK hydrolyzes its bound ATP, resulting in the formation of a stable complex. GrpE releases ADP from DnaK; ATP binding to DnaK triggers the release of the substrate protein, thus completing the reaction cycle. Several rounds of ATP-dependent interactions between DnaJ, DnaK and GrpE are required for fully efficient folding. Also involved, together with DnaK and GrpE, in the DNA replication of plasmids through activation of initiation proteins. The protein is Chaperone protein DnaJ of Rhodobacter capsulatus (Rhodopseudomonas capsulata).